The primary structure comprises 304 residues: Oxygen-dependent coproporphyrinogen-III oxidase (304 aa).

Serine 94 contacts substrate. A divalent metal cation is bound by residues histidine 98 and histidine 108. Histidine 108 (proton donor) is an active-site residue. Residue 110-112 (NVR) participates in substrate binding. The a divalent metal cation site is built by histidine 147 and histidine 177. The segment at 242-277 (YVEFNLVWDRGTLFGLQSGGRTESVLMSMPPLARWQ) is important for dimerization. 260–262 (GGR) lines the substrate pocket.

This sequence belongs to the aerobic coproporphyrinogen-III oxidase family. In terms of assembly, homodimer. It depends on a divalent metal cation as a cofactor.

The protein localises to the cytoplasm. The enzyme catalyses coproporphyrinogen III + O2 + 2 H(+) = protoporphyrinogen IX + 2 CO2 + 2 H2O. It participates in porphyrin-containing compound metabolism; protoporphyrin-IX biosynthesis; protoporphyrinogen-IX from coproporphyrinogen-III (O2 route): step 1/1. Involved in the heme biosynthesis. Catalyzes the aerobic oxidative decarboxylation of propionate groups of rings A and B of coproporphyrinogen-III to yield the vinyl groups in protoporphyrinogen-IX. The sequence is that of Oxygen-dependent coproporphyrinogen-III oxidase from Sodalis glossinidius (strain morsitans).